Consider the following 201-residue polypeptide: MAKRVTGPEIEKLIQLLAKVPGLGPRSARRAALHLIKKKDQLLGPLSHAMGEAYDKVKICSRCGNVDTVDPCTVCTDGHRDQSVIIVVEDVADLWALERAAAMNAAYHVLGGVLSPLDGVGPDDLNIRGLIQRVGEGGVREIIIAVNATVEGQTTAHYITDQLAGLEVKITRLAHGVPVGGELDYLDEGTLTAALRARTAI.

The segment at 60 to 75 (CSRCGNVDTVDPCTVC) adopts a C4-type zinc-finger fold. In terms of domain architecture, Toprim spans 83–178 (SVIIVVEDVA…KITRLAHGVP (96 aa)).

Belongs to the RecR family.

In terms of biological role, may play a role in DNA repair. It seems to be involved in an RecBC-independent recombinational process of DNA repair. It may act with RecF and RecO. The protein is Recombination protein RecR of Rhizobium rhizogenes (strain K84 / ATCC BAA-868) (Agrobacterium radiobacter).